Consider the following 720-residue polypeptide: DNA helicase II (720 aa).

The UvrD-like helicase ATP-binding domain occupies 8-286 (DSLNDKQREA…IRLEQNYRST (279 aa)). ATP-binding positions include 32–37 (GSGKTR) and R284. The region spanning 287–564 (SNILSAANAL…QLMTLHSAKG (278 aa)) is the UvrD-like helicase C-terminal domain.

It belongs to the helicase family. UvrD subfamily.

It catalyses the reaction Couples ATP hydrolysis with the unwinding of duplex DNA by translocating in the 3'-5' direction.. The catalysed reaction is ATP + H2O = ADP + phosphate + H(+). A helicase with DNA-dependent ATPase activity. Unwinds DNA duplexes with 3'-5' polarity. Translocates on single-stranded DNA with 3'-5' polarity. Initiates unwinding more efficiently from a nicked substrate than double-stranded DNA. Involved in the post-incision events of nucleotide excision repair and methyl-directed mismatch repair, and probably also in repair of alkylated DNA. The polypeptide is DNA helicase II (Escherichia coli (strain K12)).